The chain runs to 666 residues: Magnesium-chelatase 67 kDa subunit (666 aa).

37 to 44 (GRRGTGKT) provides a ligand contact to ATP. The interval 327–367 (LPDEEEQMQPPPPPPPPPPPPEPDKPDDPETPPDEAPKDEQ) is disordered. Over residues 335 to 347 (QPPPPPPPPPPPP) the composition is skewed to pro residues. The 187-residue stretch at 475–661 (LIIFVVDASG…SLAETVKSGV (187 aa)) folds into the VWFA domain.

It belongs to the Mg-chelatase subunits D/I family.

It carries out the reaction protoporphyrin IX + Mg(2+) + ATP + H2O = Mg-protoporphyrin IX + ADP + phosphate + 3 H(+). The protein operates within porphyrin-containing compound metabolism; bacteriochlorophyll biosynthesis. Functionally, involved in bacteriochlorophyll biosynthesis; introduces a magnesium ion into protoporphyrin IX to yield Mg-protoporphyrin IX. This chain is Magnesium-chelatase 67 kDa subunit (bchD), found in Heliobacterium mobile (Heliobacillus mobilis).